A 467-amino-acid chain; its full sequence is ATP synthase subunit beta (467 aa).

Position 157–164 (157–164) interacts with ATP; sequence GGAGVGKT.

This sequence belongs to the ATPase alpha/beta chains family. As to quaternary structure, F-type ATPases have 2 components, CF(1) - the catalytic core - and CF(0) - the membrane proton channel. CF(1) has five subunits: alpha(3), beta(3), gamma(1), delta(1), epsilon(1). CF(0) has three main subunits: a(1), b(2) and c(9-12). The alpha and beta chains form an alternating ring which encloses part of the gamma chain. CF(1) is attached to CF(0) by a central stalk formed by the gamma and epsilon chains, while a peripheral stalk is formed by the delta and b chains.

Its subcellular location is the cell inner membrane. It catalyses the reaction ATP + H2O + 4 H(+)(in) = ADP + phosphate + 5 H(+)(out). In terms of biological role, produces ATP from ADP in the presence of a proton gradient across the membrane. The catalytic sites are hosted primarily by the beta subunits. This chain is ATP synthase subunit beta, found in Desulfosudis oleivorans (strain DSM 6200 / JCM 39069 / Hxd3) (Desulfococcus oleovorans).